Here is a 365-residue protein sequence, read N- to C-terminus: MKRQLILEDGTVLIGTGFGGEIEKSGEVVFTTGMTGYQETLSDPSYCGQIVTFTYPLIGNYGINRDDFESIHPSVNGLIVNEICDHPSNFRNEISLNDYLKERNIPGLAGIDTRKLTRKIRQYGTLRGRLCNMDADVEYIVSQLKATVFTDHVKRVSTKDPYPSPGRGHRVVLVDFGMKHGILRELNKRDCDVIVVPYNTTAEEILRLSPDGIMLSNGPGDPKDVPEAIEMLKDIIGKVPLFGICLGHQLFALASGANTSKLKFGHRGLNHPVKNLATGKVAITSQNHGYAVEEESVENTELEITHVALNDGTVEGLRHKKFPAFTVQYHPEASAGPEDANDLFEDFLTMIENFKKEGEELCQNA.

2 CPSase regions span residues 1-166 and 1-169; these read MKRQ…PSPG and MKRQ…GRGH. L-glutamine is bound by residues Ser45, Gly218, and Gly220. Positions 170–357 constitute a Glutamine amidotransferase type-1 domain; it reads RVVLVDFGMK…LTMIENFKKE (188 aa). Cys245 acts as the Nucleophile in catalysis. L-glutamine-binding residues include Leu246, Gln249, Asn287, Gly289, and Tyr290. Active-site residues include His330 and Glu332.

This sequence belongs to the CarA family. In terms of assembly, composed of two chains; the small (or glutamine) chain promotes the hydrolysis of glutamine to ammonia, which is used by the large (or ammonia) chain to synthesize carbamoyl phosphate. Tetramer of heterodimers (alpha,beta)4.

The catalysed reaction is hydrogencarbonate + L-glutamine + 2 ATP + H2O = carbamoyl phosphate + L-glutamate + 2 ADP + phosphate + 2 H(+). The enzyme catalyses L-glutamine + H2O = L-glutamate + NH4(+). It functions in the pathway amino-acid biosynthesis; L-arginine biosynthesis; carbamoyl phosphate from bicarbonate: step 1/1. It participates in pyrimidine metabolism; UMP biosynthesis via de novo pathway; (S)-dihydroorotate from bicarbonate: step 1/3. Functionally, small subunit of the glutamine-dependent carbamoyl phosphate synthetase (CPSase). CPSase catalyzes the formation of carbamoyl phosphate from the ammonia moiety of glutamine, carbonate, and phosphate donated by ATP, constituting the first step of 2 biosynthetic pathways, one leading to arginine and/or urea and the other to pyrimidine nucleotides. The small subunit (glutamine amidotransferase) binds and cleaves glutamine to supply the large subunit with the substrate ammonia. The protein is Carbamoyl phosphate synthase small chain of Bacillus cereus (strain ATCC 10987 / NRS 248).